We begin with the raw amino-acid sequence, 348 residues long: tRNA pseudouridine synthase D (348 aa).

Phenylalanine 27 provides a ligand contact to substrate. Residue aspartate 80 is the Nucleophile of the active site. Asparagine 129 contacts substrate. The TRUD domain occupies glycine 155–leucine 303. Position 329 (phenylalanine 329) interacts with substrate.

Belongs to the pseudouridine synthase TruD family.

The catalysed reaction is uridine(13) in tRNA = pseudouridine(13) in tRNA. In terms of biological role, responsible for synthesis of pseudouridine from uracil-13 in transfer RNAs. The chain is tRNA pseudouridine synthase D from Pectobacterium carotovorum subsp. carotovorum (strain PC1).